A 340-amino-acid polypeptide reads, in one-letter code: Dof zinc finger protein DOF2.2 (340 aa).

The tract at residues 12 to 33 is disordered; it reads PPINWPQSANPNNHPHHHQLQE. The Dof-type zinc-finger motif lies at 94–148; it reads LKCPRCDSANTKFCYFNNYNLTQPRHFCKACRRYWTRGGALRNVPVGGGCRRNKK. Positions 96, 99, 121, and 124 each coordinate Zn(2+). 2 disordered regions span residues 138–180 and 301–340; these read PVGG…TSNV and GNIS…QHLM. The span at 151–165 shows a compositional bias: low complexity; it reads SGNSKSSSSSQNKQS. 2 stretches are compositionally biased toward polar residues: residues 166–180 and 309–331; these read TSMV…TSNV and GLTS…GSSS.

The protein resides in the nucleus. In terms of biological role, transcription factor that binds specifically to a 5'-AA[AG]G-3' consensus core sequence. This is Dof zinc finger protein DOF2.2 (DOF2.2) from Arabidopsis thaliana (Mouse-ear cress).